The following is a 377-amino-acid chain: Dehydrogenase/reductase SDR family member 13 (377 aa).

An N-terminal signal peptide occupies residues 1–25; sequence MEALLLGVGLLLGAYVLVYYNLVKA. Residues S46 and I48 each contribute to the NAD(+) site. S170 contacts substrate. Positions 197, 201, and 232 each coordinate NAD(+). Catalysis depends on Y197, which acts as the Proton acceptor. The segment at 310–363 is disordered; sequence LAGLGPGEDAESDEDSQPEDPGTPSSPSSPHPEEPTVSELYPSPQSSTDRSTVT. The segment covering 317-327 has biased composition (acidic residues); it reads EDAESDEDSQP. Residues 328 to 337 show a composition bias toward low complexity; the sequence is EDPGTPSSPS. Residues 352–363 are compositionally biased toward polar residues; it reads SPQSSTDRSTVT.

The protein belongs to the short-chain dehydrogenases/reductases (SDR) family.

It localises to the secreted. Putative oxidoreductase. The protein is Dehydrogenase/reductase SDR family member 13 (DHRS13) of Bos taurus (Bovine).